Here is a 334-residue protein sequence, read N- to C-terminus: Methionine adenosyltransferase 2 subunit beta (334 aa).

Residues 37-40, 60-62, 71-72, cysteine 93, arginine 97, and tyrosine 159 each bind NADP(+); these read TGLL, YSR, and NL. Residues 319 to 334 are required for interaction with MAT2A; sequence LWPFLVDKRWRQTVFH.

This sequence belongs to the dTDP-4-dehydrorhamnose reductase family. MAT2B subfamily. Heterotrimer; composed of a catalytic mat2a homodimer that binds one regulatory mat2b chain. Heterohexamer; composed of a central, catalytic mat2a homotetramer flanked on either side by a regulatory mat2b chain. NADP binding increases the affinity for mat2a.

The protein operates within amino-acid biosynthesis; S-adenosyl-L-methionine biosynthesis; S-adenosyl-L-methionine from L-methionine: step 1/1. In terms of biological role, regulatory subunit of S-adenosylmethionine synthetase 2, an enzyme that catalyzes the formation of S-adenosylmethionine from methionine and ATP. Regulates MAT2A catalytic activity by changing its kinetic properties, increasing its affinity for L-methionine. Can bind NADP (in vitro). This Xenopus laevis (African clawed frog) protein is Methionine adenosyltransferase 2 subunit beta (mat2b).